The chain runs to 350 residues: Ion-translocating oxidoreductase complex subunit D (350 aa).

5 consecutive transmembrane segments (helical) span residues 15–35, 36–56, 67–87, 88–108, and 122–142; these read QTQTLMLLVILACLPGLLAQT, WFFGWGSFIQILLALVTALGA, PIKPALMDGSAALTAVLIGLS, LPPLLPWWMLVLGTAFAIIIA, and PAMVAYVLLLVSFPVQMTSWL. An FMN phosphoryl threonine modification is found at Thr186. 4 helical membrane passes run 213–233, 242–262, 264–284, and 299–316; these read WGGIGWSWVNLGYLLGGLFLL, IPGAILGSLLLAATLGYLMTP, ATATPMFHLFSGATMLGAFFI, and LVYGVLIGVLVYLIRRFG.

Belongs to the NqrB/RnfD family. The complex is composed of six subunits: RnfA, RnfB, RnfC, RnfD, RnfE and RnfG. It depends on FMN as a cofactor.

The protein localises to the cell inner membrane. Part of a membrane-bound complex that couples electron transfer with translocation of ions across the membrane. This chain is Ion-translocating oxidoreductase complex subunit D, found in Aeromonas salmonicida (strain A449).